Reading from the N-terminus, the 208-residue chain is Small ribosomal subunit protein uS4A (208 aa).

The S4 RNA-binding domain maps to 98 to 159 (SRLDNVAYNM…HAKSYLRIKA (62 aa)).

Belongs to the universal ribosomal protein uS4 family. In terms of assembly, part of the 30S ribosomal subunit. Contacts protein S5. The interaction surface between S4 and S5 is involved in control of translational fidelity.

In terms of biological role, one of the primary rRNA binding proteins, it binds directly to 16S rRNA where it nucleates assembly of the body of the 30S subunit. With S5 and S12 plays an important role in translational accuracy. The protein is Small ribosomal subunit protein uS4A (rpsD1) of Nitrosomonas europaea (strain ATCC 19718 / CIP 103999 / KCTC 2705 / NBRC 14298).